Reading from the N-terminus, the 365-residue chain is G-protein coupled receptor 68 (365 aa).

Residues 1–12 (MGNITTENSSLS) are Extracellular-facing. 2 N-linked (GlcNAc...) asparagine glycosylation sites follow: Asn-3 and Asn-8. A helical membrane pass occupies residues 13-49 (CPIDHTIHQTLAPVVYVTVLVVGFPANCLSLYFGYLQ). 2 cysteine pairs are disulfide-bonded: Cys-13-Cys-258 and Cys-94-Cys-172. Over 50–53 (IKAR) the chain is Cytoplasmic. Residues 54-84 (NELGVYLCNLTIADLFYICSLPFWLQYVLQH) traverse the membrane as a helical segment. Topologically, residues 85 to 89 (DDWSH) are extracellular. A helical membrane pass occupies residues 90–125 (GDLSCQVCGILLYENIYISVGFLCCISIDRYLAVAH). Residues 126-133 (PFRFHQFR) are Cytoplasmic-facing. The chain crosses the membrane as a helical span at residues 134-160 (TLKAAVGVSVLIWAKELLTSIYFLNHK). Over 161-176 (EVIEDEDQHRVCFEHY) the chain is Extracellular. The tract at residues 161 to 176 (EVIEDEDQHRVCFEHY) is extracellular loop 2 (ECL2). Residues 177 to 214 (PIQAWQRSINYYRFLVGFLFPICLLLASYQGILRAVRR) traverse the membrane as a helical segment. The Cytoplasmic segment spans residues 215–218 (SHGT). Residues 219 to 254 (QKSRKDQIQRLVLSTVVIFLACFLPYHVLLLVRSLW) traverse the membrane as a helical segment. Residues 255–260 (ERNCEF) are Extracellular-facing. The helical transmembrane segment at 261 to 289 (AKSIFNVYHFSLLLTSFNCVADPVLYCFV) threads the bilayer. Topologically, residues 290-365 (SETTHRDLAR…VGGPSTVGLA (76 aa)) are cytoplasmic.

It belongs to the G-protein coupled receptor 1 family. Expressed in the lung, testis, heart, brain, spleen, thymus, brown fat, small intestine, colon, peripheral blood leukocytes, macrophages, stomach, ovary and white fat but not in the liver, kidney, and skeletal muscle. Expression in the prostate is weak but detectable. Specifically expressed in endothelial cells of small-diameter resistance arteries.

The protein localises to the cell membrane. With respect to regulation, activated by a network of residues that connects an extracellular-facing cavity to Glu-149, a conserved charged residue buried in the transmembrane core of the receptor. Protonation likely drives conformational changes in extracellular loop 2 (ECL2), which stabilizes movement of transmembrane 3 (TM3) and a series of rearrangements that connect the extracellular-facing cavity to Glu-149, a residue only conserved in proton-sensing G-protein coupled receptors. Activated in an allosteric manner by divalent metal ions at the extracellular surface following the order: Cd(2+) &gt; Co(2+) &gt; Ni(2+) &gt; Zn(2+) &gt; Fe(2+) &gt; Ca(2+) &gt; Mg(2+). Activated by ogerin (ZINC67740571), a selective GPR68 positive allosteric modulator. Inhibited by small molecule GPR68-I, decreasing inflammation in models of colitis. In terms of biological role, proton-sensing G-protein coupled receptor activated by extracellular pH, which is required to monitor pH changes and generate adaptive reactions. The receptor is almost silent at pH 7.8 but fully activated at pH 6.8. Ligand binding causes a conformation change that triggers signaling via guanine nucleotide-binding proteins (G proteins) and modulates the activity of downstream effectors, such as phospholipase C. GPR68 is mainly coupled to G(q) G proteins and mediates production of diacylglycerol (DAG) and inositol 1,4,5-trisphosphate (IP3). Acts as a key mechanosensor of fluid shear stress and membrane stretch. Expressed in endothelial cells of small-diameter resistance arteries, where it mediates flow-induced dilation in response to shear stress. May represents an osteoblastic pH sensor regulating cell-mediated responses to acidosis in bone. Acts as a regulator of calcium-sensing receptor CASR in a seesaw manner: GPR68-mediated signaling inhibits CASR signaling in response to protons, while CASR inhibits GPR68 in presence of extracellular calcium. Also functions as a metastasis suppressor gene in prostate cancer. This is G-protein coupled receptor 68 from Mus musculus (Mouse).